A 121-amino-acid chain; its full sequence is Cell division protein FtsB (121 aa).

The Cytoplasmic portion of the chain corresponds to 1–6 (MRNWRW). The helical transmembrane segment at 7–24 (LLLVLAVLLAWLQYRFWF) threads the bilayer. Over 25-121 (GPGNSGEVMM…PEPVDPVDHP (97 aa)) the chain is Periplasmic. Residues 31–66 (EVMMLEAQVAHQTQDNEGLRQRNQALAAEVKDLKDG) are a coiled coil. Residues 98–121 (APASAEASAPAQQAPEPVDPVDHP) are disordered. Residues 99-113 (PASAEASAPAQQAPE) show a composition bias toward low complexity.

The protein belongs to the FtsB family. In terms of assembly, part of a complex composed of FtsB, FtsL and FtsQ.

The protein resides in the cell inner membrane. In terms of biological role, essential cell division protein. May link together the upstream cell division proteins, which are predominantly cytoplasmic, with the downstream cell division proteins, which are predominantly periplasmic. This chain is Cell division protein FtsB, found in Xanthomonas axonopodis pv. citri (strain 306).